The following is a 1186-amino-acid chain: Syntaxin-binding protein 5-like (1186 aa).

M1 carries the post-translational modification N-acetylmethionine. The interval 15–40 (ASSPGSGSSSGSNSGGGAGSGSVHPA) is disordered. Residues 16 to 26 (SSPGSGSSSGS) are compositionally biased toward low complexity. WD repeat units lie at residues 74 to 107 (TALA…CYCQ), 114 to 153 (VLQL…SLKF), 158 to 194 (ITYC…GYVI), 213 to 247 (HLSD…ELRV), 253 to 285 (IHSI…PSRP), 307 to 349 (PILK…KAIT), 357 to 391 (IVEF…VVDL), 413 to 490 (TCTA…YKLK), 518 to 629 (QMIY…ELVI), and 643 to 705 (TSLA…IADN). T568 carries the phosphothreonine modification. Residues S574, S589, and S593 each carry the phosphoserine modification. T596 carries the phosphothreonine modification. At S599 the chain carries Phosphoserine. Omega-N-methylarginine is present on R709. Residues 748 to 769 (TSDHVNGHCTSPTSQSCSSGKR) show a composition bias toward polar residues. Residues 748 to 771 (TSDHVNGHCTSPTSQSCSSGKRLS) form a disordered region. Phosphoserine occurs at positions 763, 765, 766, 771, 772, 793, 800, 812, 820, 822, and 823. WD repeat units follow at residues 832–889 (ITAL…SGTF), 898–969 (TFSC…QTCL), 974–1018 (ITET…LDVN), and 1032–1055 (CFTN…TYSQ). T1093 carries the phosphothreonine modification. A v-SNARE coiled-coil homology domain is found at 1121–1181 (SIEGMKGAAG…HELMLKYKDK (61 aa)).

This sequence belongs to the WD repeat L(2)GL family. Interacts with STX1A and STX4. In terms of processing, phosphorylated, leading to STXBP5L increased turnover and subsequent de-repression of insulin secretion. Phosphorylated on serine residues in response to glucose or phorbol esters. Ubiquitinated by the E3 ligase SYVN1, leading to STXBP5L proteasomal degradation. Detected in kidney, hippocampus and lung carcinoma.

It is found in the cytoplasm. The protein resides in the cell membrane. The protein localises to the membrane. Plays a role in vesicle trafficking and exocytosis inhibition. In pancreatic beta-cells, inhibits insulin secretion probably by interacting with and regulating STX1A and STX4, key t-SNARE proteins involved in the fusion of insulin granules to the plasma membrane. Also plays a role in neurotransmitter release by inhibiting basal acetylcholine release from axon terminals and by preventing synaptic fatigue upon repetitive stimulation. Promotes as well axonal outgrowth. The polypeptide is Syntaxin-binding protein 5-like (STXBP5L) (Homo sapiens (Human)).